A 147-amino-acid chain; its full sequence is Hemoglobin subunit beta-1/2 (147 aa).

The residue at position 2 (Val-2) is an N-acetylvaline. Positions 3–147 (HLSSEEKSAV…VANALAHKYH (145 aa)) constitute a Globin domain. Phosphothreonine is present on Thr-13. Ser-45 bears the Phosphoserine mark. Lys-60 carries the N6-acetyllysine modification. His-64 contributes to the heme b binding site. Lys-83 is subject to N6-acetyllysine. Position 93 (His-93) interacts with heme b. Cys-94 is subject to S-nitrosocysteine. Residue Lys-145 is modified to N6-acetyllysine.

The protein belongs to the globin family. Heterotetramer of two alpha chains and two beta chains. As to expression, red blood cells.

Its function is as follows. Involved in oxygen transport from the lung to the various peripheral tissues. The sequence is that of Hemoglobin subunit beta-1/2 (HBB1) from Oryctolagus cuniculus (Rabbit).